We begin with the raw amino-acid sequence, 130 residues long: Holo-[acyl-carrier-protein] synthase (130 aa).

Aspartate 9 and glutamate 58 together coordinate Mg(2+).

Belongs to the P-Pant transferase superfamily. AcpS family. Mg(2+) serves as cofactor.

The protein localises to the cytoplasm. The enzyme catalyses apo-[ACP] + CoA = holo-[ACP] + adenosine 3',5'-bisphosphate + H(+). In terms of biological role, transfers the 4'-phosphopantetheine moiety from coenzyme A to a Ser of acyl-carrier-protein. The protein is Holo-[acyl-carrier-protein] synthase of Mycobacterium marinum (strain ATCC BAA-535 / M).